A 156-amino-acid chain; its full sequence is uncharacterized protein (156 aa).

Positions 1-27 (MKLLVLRLILIISTIFVLLNLSCMVNG) are cleaved as a signal peptide. Asparagine 20, asparagine 83, asparagine 103, asparagine 106, and asparagine 134 each carry an N-linked (GlcNAc...) asparagine glycan.

It localises to the secreted. This is an uncharacterized protein from Dictyostelium discoideum (Social amoeba).